The chain runs to 102 residues: RNA-binding protein Hfq (102 aa).

The region spanning 9–68 (DPFLNALRRERVPVSIYLVNGIKLQGQIESFDQFVILLKNTVSQMVYKHAISTVVPSRPV) is the Sm domain. Positions 65-102 (SRPVSHHSSNTSVGASVGNYHSGGVSAPAAQQESDGTE) are disordered. The span at 93-102 (AAQQESDGTE) shows a compositional bias: polar residues.

This sequence belongs to the Hfq family. As to quaternary structure, homohexamer.

In terms of biological role, RNA chaperone that binds small regulatory RNA (sRNAs) and mRNAs to facilitate mRNA translational regulation in response to envelope stress, environmental stress and changes in metabolite concentrations. Also binds with high specificity to tRNAs. This is RNA-binding protein Hfq from Photorhabdus laumondii subsp. laumondii (strain DSM 15139 / CIP 105565 / TT01) (Photorhabdus luminescens subsp. laumondii).